The following is a 404-amino-acid chain: MKKIYDLWVRVSLIKKIGIGVVIGVMLGILAPDLTGFSILGKLFVGGLKAIAPLLVFALVSQAISHQKKGRQTNMTLIIVLYLFGTFASALVAVLTAYLFPLTLVLNTPVNTELSPPQGVAEVFQSLLLKLVDNPINALATANYIGVLSWAIIFGLALKAASQETKHLIKTAAEVTSQIVVWIINLAPIGIMSLVFTTISENGVGILSDYAFLILVLVGTMVFVALVVNPLIAVLITRQNPYPLVLRCLRESGLTAFFTRSSAANIPVNMQLCQKIGLSKDTYSVSIPLGATINMGGAAITINVLTLAAVHTFGIPIDFLTALLLSVVAAVSACGASGVAGGSLLLIPVACSLFGISNDLAMQVVGVGFIVGVIQDSCETALNSSTDVLFTAIAENAFWKRKKA.

8 consecutive transmembrane segments (helical) span residues 17-37 (IGIGVVIGVMLGILAPDLTGF), 39-59 (ILGKLFVGGLKAIAPLLVFAL), 75-95 (MTLIIVLYLFGTFASALVAVL), 138-158 (ALATANYIGVLSWAIIFGLAL), 179-199 (IVVWIINLAPIGIMSLVFTTI), 212-232 (FLILVLVGTMVFVALVVNPLI), 287-307 (IPLGATINMGGAAITINVLTL), and 313-333 (FGIPIDFLTALLLSVVAAVSA).

This sequence belongs to the dicarboxylate/amino acid:cation symporter (DAACS) (TC 2.A.23) family.

It is found in the cell membrane. It catalyses the reaction L-serine(in) + Na(+)(in) = L-serine(out) + Na(+)(out). It carries out the reaction L-threonine(in) + Na(+)(in) = L-threonine(out) + Na(+)(out). Involved in the import of serine and threonine into the cell, with the concomitant import of sodium (symport system). This is Serine/threonine transporter SstT from Streptococcus pyogenes serotype M2 (strain MGAS10270).